The following is a 157-amino-acid chain: Crossover junction endodeoxyribonuclease RuvC (157 aa).

Residues D7, E66, and D139 contribute to the active site. Mg(2+)-binding residues include D7, E66, and D139.

It belongs to the RuvC family. As to quaternary structure, homodimer which binds Holliday junction (HJ) DNA. The HJ becomes 2-fold symmetrical on binding to RuvC with unstacked arms; it has a different conformation from HJ DNA in complex with RuvA. In the full resolvosome a probable DNA-RuvA(4)-RuvB(12)-RuvC(2) complex forms which resolves the HJ. The cofactor is Mg(2+).

The protein localises to the cytoplasm. It catalyses the reaction Endonucleolytic cleavage at a junction such as a reciprocal single-stranded crossover between two homologous DNA duplexes (Holliday junction).. In terms of biological role, the RuvA-RuvB-RuvC complex processes Holliday junction (HJ) DNA during genetic recombination and DNA repair. Endonuclease that resolves HJ intermediates. Cleaves cruciform DNA by making single-stranded nicks across the HJ at symmetrical positions within the homologous arms, yielding a 5'-phosphate and a 3'-hydroxyl group; requires a central core of homology in the junction. The consensus cleavage sequence is 5'-(A/T)TT(C/G)-3'. Cleavage occurs on the 3'-side of the TT dinucleotide at the point of strand exchange. HJ branch migration catalyzed by RuvA-RuvB allows RuvC to scan DNA until it finds its consensus sequence, where it cleaves and resolves the cruciform DNA. This chain is Crossover junction endodeoxyribonuclease RuvC, found in Helicobacter acinonychis (strain Sheeba).